Consider the following 195-residue polypeptide: HTH-type transcriptional regulator BetI (195 aa).

The HTH tetR-type domain maps to 8 to 68; it reads SIRRRQLIDA…ATMRDITSQL (61 aa). The H-T-H motif DNA-binding region spans 31–50; it reads TIAQIARRAGVSTGIISHYF.

It participates in amine and polyamine biosynthesis; betaine biosynthesis via choline pathway [regulation]. Repressor involved in the biosynthesis of the osmoprotectant glycine betaine. It represses transcription of the choline transporter BetT and the genes of BetAB involved in the synthesis of glycine betaine. This is HTH-type transcriptional regulator BetI from Escherichia coli (strain UTI89 / UPEC).